The following is a 510-amino-acid chain: Glycosyl hydrolase YngK (510 aa).

An N-terminal signal peptide occupies residues 1-30; sequence MKVCQKSIVRFLVSLIIGTFVISVPFMANA.

The protein belongs to the glycosyl hydrolase-like 10 (GHL10) family.

In Bacillus subtilis (strain 168), this protein is Glycosyl hydrolase YngK (yngK).